The following is a 92-amino-acid chain: Small ribosomal subunit protein uS19 (92 aa).

This sequence belongs to the universal ribosomal protein uS19 family.

In terms of biological role, protein S19 forms a complex with S13 that binds strongly to the 16S ribosomal RNA. The chain is Small ribosomal subunit protein uS19 from Aliivibrio fischeri (strain ATCC 700601 / ES114) (Vibrio fischeri).